Here is a 710-residue protein sequence, read N- to C-terminus: Protein CNGC15a (710 aa).

6 helical membrane-spanning segments follow: residues 85-105, 115-135, 174-194, 207-226, 248-268, and 368-388; these read IFLA…YLPV, SIGL…FYII, LWSD…AVIP, VVRL…IYPL, YLTL…LLSI, and AEIN…ALLI. Position 474 to 559 (474 to 559) interacts with a nucleoside 3',5'-cyclic phosphate; the sequence is LFDQMDDRML…WALDPRPTAV (86 aa).

It belongs to the cyclic nucleotide-gated cation channel (TC 1.A.1.5) family. As to quaternary structure, interacts (via N-terminus) with DMI1 (via c-terminus). The Nod factor has no effect on this interaction, implying that the complex is maintained after activation. In terms of tissue distribution, expressed in roots, stems, leaves, flowers and pods.

Its subcellular location is the nucleus membrane. Functionally, cyclic nucleotide-gated channel involved in the establishment of both rhizobial and mycorrhizal associations. Required for full activation of nuclear-localized Ca(2+) oscillations by Nod and Myc factors. Simultaneous activation of the K(+)-permeable channel DMI1 and the Ca(2+) channel CNGC15 can give rise to sustained Ca(2+) oscillations. May function during fertilization in both female and male gametophytic Ca(2+) signaling. This Medicago truncatula (Barrel medic) protein is Protein CNGC15a.